We begin with the raw amino-acid sequence, 450 residues long: Plasminogen-binding protein PgbA (450 aa).

3 stretches are compositionally biased toward basic and acidic residues: residues 262–273 (EIKQEAIKEPKK), 284–310 (LEEK…DERK), and 317–362 (KAME…REIN). Residues 262–450 (EIKQEAIKEP…RRKALEMNKK (189 aa)) are disordered. The segment covering 363 to 386 (QESANEPSSENNATLKDTENTSVL) has biased composition (polar residues). Over residues 389 to 450 (SAAKKEAPKP…RRKALEMNKK (62 aa)) the composition is skewed to basic and acidic residues.

Its subcellular location is the cell surface. Binds plasminogen, specifically, and in a concentration and lysine-dependent manner. Plasminogen is the precursor of plasmin, a serine protease that cleaves fibrin, fibronectin, laminin and vitronectin. Acquisition of plasminogen/plasmin could enable H.pylori to degrade host components. In Helicobacter pylori (strain J99 / ATCC 700824) (Campylobacter pylori J99), this protein is Plasminogen-binding protein PgbA (pgbA).